Here is a 251-residue protein sequence, read N- to C-terminus: uncharacterized protein (251 aa).

This sequence belongs to the methyltransferase superfamily.

Its subcellular location is the cytoplasm. It localises to the nucleus. In terms of biological role, probable methyltransferase. This is an uncharacterized protein from Schizosaccharomyces pombe (strain 972 / ATCC 24843) (Fission yeast).